The following is a 393-amino-acid chain: MKFTLISSCIAIAALAVAVDAAPGEKKISIPLAKNPNYKPSAKNAIQKAIAKYNKHKINTSTGGIVPDAGVGTVPMTDYGNDVEYYGQVTIGTPGKKFNLDFDTGSSDLWIASTLCTNCGSRQTKYDPKQSSTYQADGRTWSISYGDGSSASGILAKDNVNLGGLLIKGQTIELAKREAASFANGPNDGLLGLGFDTITTVRGVKTPMDNLISQGLISRPIFGVYLGKASNGGGGEYIFGGYDSTKFKGSLTTVPIDNSRGWWGITVDRATVGTSTVASSFDGILDTGTTLLILPNNVAASVARAYGASDNGDGTYTISCDTSRFKPLVFSINGASFQVSPDSLVFEEYQGQCIAGFGYGNFDFAIIGDTFLKNNYVVFNQGVPEVQIAPVAQ.

Positions 1–21 are cleaved as a signal peptide; that stretch reads MKFTLISSCIAIAALAVAVDA. Positions 22–68 are cleaved as a propeptide — activation peptide; the sequence is APGEKKISIPLAKNPNYKPSAKNAIQKAIAKYNKHKINTSTGGIVPD. The Peptidase A1 domain occupies 85–389; the sequence is YYGQVTIGTP…NQGVPEVQIA (305 aa). The active site involves Asp-103. A disulfide bridge connects residues Cys-116 and Cys-119. The active site involves Asp-286. Cys-320 and Cys-353 are disulfide-bonded.

The protein belongs to the peptidase A1 family.

It carries out the reaction Hydrolysis of proteins with broad specificity similar to that of pepsin A, preferring hydrophobic residues at P1 and P1'. Clots milk and activates trypsinogen. Does not cleave 4-Gln-|-His-5, but does cleave 10-His-|-Leu-11 and 12-Val-|-Glu-13 in B chain of insulin.. The polypeptide is Rhizopuspepsin (Rhizopus chinensis (Bread mold)).